We begin with the raw amino-acid sequence, 341 residues long: Biotin synthase (341 aa).

Residues 40–267 (AEIQVSTLLS…RSMVRLSAGR (228 aa)) enclose the Radical SAM core domain. Cys-55, Cys-59, and Cys-62 together coordinate [4Fe-4S] cluster. Positions 99, 130, 190, and 262 each coordinate [2Fe-2S] cluster.

Belongs to the radical SAM superfamily. Biotin synthase family. In terms of assembly, homodimer. [4Fe-4S] cluster serves as cofactor. The cofactor is [2Fe-2S] cluster.

The catalysed reaction is (4R,5S)-dethiobiotin + (sulfur carrier)-SH + 2 reduced [2Fe-2S]-[ferredoxin] + 2 S-adenosyl-L-methionine = (sulfur carrier)-H + biotin + 2 5'-deoxyadenosine + 2 L-methionine + 2 oxidized [2Fe-2S]-[ferredoxin]. Its pathway is cofactor biosynthesis; biotin biosynthesis; biotin from 7,8-diaminononanoate: step 2/2. Catalyzes the conversion of dethiobiotin (DTB) to biotin by the insertion of a sulfur atom into dethiobiotin via a radical-based mechanism. In Xylella fastidiosa (strain M23), this protein is Biotin synthase.